The following is a 243-amino-acid chain: 4-phosphopantoate--beta-alanine ligase (243 aa).

Residues arginine 15, arginine 37, 176 to 178 (DLN), and 182 to 183 (RT) contribute to the ATP site.

It belongs to the archaeal phosphopantothenate synthetase family. As to quaternary structure, homodimer.

The enzyme catalyses (R)-4-phosphopantoate + beta-alanine + ATP = (R)-4'-phosphopantothenate + AMP + diphosphate + H(+). It participates in cofactor biosynthesis; coenzyme A biosynthesis. Functionally, catalyzes the condensation of (R)-4-phosphopantoate and beta-alanine to 4'-phosphopantothenate in the CoA biosynthesis pathway. The chain is 4-phosphopantoate--beta-alanine ligase from Methanospirillum hungatei JF-1 (strain ATCC 27890 / DSM 864 / NBRC 100397 / JF-1).